We begin with the raw amino-acid sequence, 302 residues long: Putative gluconeogenesis factor (302 aa).

This sequence belongs to the gluconeogenesis factor family.

It localises to the cytoplasm. Required for morphogenesis under gluconeogenic growth conditions. This is Putative gluconeogenesis factor (ybhK) from Salmonella typhimurium (strain LT2 / SGSC1412 / ATCC 700720).